The primary structure comprises 74 residues: Homeobox protein H40 (74 aa).

Positions 8–67 (ARRARTAFTYEQLVALENKFKTTRYLSVCERLNLALSLSLTETQVKIWFQNRRTKWKKQN) form a DNA-binding region, homeobox.

The protein localises to the nucleus. The polypeptide is Homeobox protein H40 (Apis mellifera (Honeybee)).